Reading from the N-terminus, the 210-residue chain is Keratin-associated protein 26-1 (210 aa).

This sequence belongs to the PMG family. As to quaternary structure, interacts with hair keratins. Localized high up in the well differentiated portion of the hair follicle cuticle (about 10-15 cell layers above the apex of the dermal papilla).

In terms of biological role, in the hair cortex, hair keratin intermediate filaments are embedded in an interfilamentous matrix, consisting of hair keratin-associated proteins (KRTAP), which are essential for the formation of a rigid and resistant hair shaft through their extensive disulfide bond cross-linking with abundant cysteine residues of hair keratins. The matrix proteins include the high-sulfur and high-glycine-tyrosine keratins. This is Keratin-associated protein 26-1 (KRTAP26-1) from Homo sapiens (Human).